We begin with the raw amino-acid sequence, 247 residues long: Cell division protein ZapD (247 aa).

Belongs to the ZapD family. In terms of assembly, interacts with FtsZ.

The protein localises to the cytoplasm. In terms of biological role, cell division factor that enhances FtsZ-ring assembly. Directly interacts with FtsZ and promotes bundling of FtsZ protofilaments, with a reduction in FtsZ GTPase activity. The sequence is that of Cell division protein ZapD from Cronobacter sakazakii (strain ATCC BAA-894) (Enterobacter sakazakii).